We begin with the raw amino-acid sequence, 145 residues long: Alpha-amylase/trypsin inhibitor CMa (145 aa).

The N-terminal stretch at 1-25 (MASKSSITPLLLAAVLASVFAAATA) is a signal peptide.

The protein belongs to the protease inhibitor I6 (cereal trypsin/alpha-amylase inhibitor) family. In terms of assembly, heterotetramer of one CMa, one CMb and two CMd chains. Post-translationally, five disulfide bonds, which are essential for the inhibitor activity, are probably present. Endosperm.

Its subcellular location is the secreted. Functionally, alpha-amylase/trypsin inhibitor. It could be involved in insect defense mechanisms. The sequence is that of Alpha-amylase/trypsin inhibitor CMa (IAT1) from Hordeum vulgare (Barley).